Consider the following 997-residue polypeptide: Chromosomal passenger complex protein bir1 (997 aa).

BIR repeat units follow at residues 25-99 (RLDT…PWAY) and 120-194 (REQT…VFFT). 4 residues coordinate Zn(2+): Cys163, Cys166, His183, and Cys190. Disordered regions lie at residues 217-329 (EDLT…FSKG), 370-527 (TVSD…ENDE), 682-701 (TRDVSSPVSDEKSENVNHEE), 755-782 (SPKLQSKNNQTVEAVNTETSDKLQEKEA), and 817-838 (RTSVQNGTRSVSKNTPEKETKV). The segment covering 240–252 (TLNFSPSRKNNLN) has biased composition (polar residues). A compositionally biased stretch (basic residues) spans 288-299 (PRRKNKSPKKSK). The segment covering 311 to 320 (SDEDEDDDDL) has biased composition (acidic residues). The span at 370 to 392 (TVSDITGHQSVTDESDEQNNCMS) shows a compositional bias: polar residues. A compositionally biased stretch (low complexity) spans 408–423 (SVVSKSKEISSSVSSV). The segment covering 426 to 451 (EQNHTEKQVAIETPEQQKVEKEDEHL) has biased composition (basic and acidic residues). Composition is skewed to polar residues over residues 463–476 (KQPISSKPSTSSPD) and 485–512 (RVSSSSFRDKILQTNFSPRSTIDSFSNI). Positions 756 to 772 (PKLQSKNNQTVEAVNTE) are enriched in polar residues. The span at 773–782 (TSDKLQEKEA) shows a compositional bias: basic and acidic residues. Over residues 817 to 830 (RTSVQNGTRSVSKN) the composition is skewed to polar residues.

As to quaternary structure, component of the CPC complex at least composed of ark1, bir1 and pic1. Interacts with the mitotic checkpoint complex (MCC) subunit mad3. Phosphorylated by ark1.

It localises to the nucleus. The protein resides in the cytoplasm. Its subcellular location is the cytoskeleton. It is found in the spindle. The protein localises to the chromosome. It localises to the centromere. In terms of biological role, component of the chromosomal passenger complex (CPC), a complex that acts as a key regulator of chromosome segregation and cytokinesis. Has a role in chromosome segregation by recruiting condensin and ark1 kinase to appropriate sites as the cell progresses through mitosis. Ark1 activity depends upon bir1 function and phosphorylation. Ark1 with bir1 function is required for full-scale association with kinetochores and formation of a complex with mad3. In Schizosaccharomyces pombe (strain 972 / ATCC 24843) (Fission yeast), this protein is Chromosomal passenger complex protein bir1 (bir1).